A 1838-amino-acid chain; its full sequence is Collagen alpha-1(V) chain (1838 aa).

Residues 1 to 36 (MDVHTRWKAARPGALLLSSPLLLFLLLLWAPPSSRA) form the signal peptide. The region spanning 72 to 244 (DVAYRVSKDA…DYCEHYSPDC (173 aa)) is the Laminin G-like domain. Residues 231–443 (RAAYDYCEHY…MPANQDTIFE (213 aa)) form a nonhelical region region. A sulfotyrosine mark is found at Y234, Y236, Y240, Y262, and Y263. Disordered regions lie at residues 242-545 (PDCD…QESQ) and 559-1574 (GPAG…EVIQ). Positions 258-268 (NPDEYYPEGEG) are enriched in acidic residues. Composition is skewed to low complexity over residues 335 to 345 (DYDYVPPDDYY), 374 to 387 (VPTSTTVTSNTSNP), 413 to 428 (YDPYFDPDSDSSVSPS), and 460 to 469 (IIEPGMLIEG). Positions 444 to 558 (GIGGPRGEKG…ILQQARLALR (115 aa)) are interrupted collagenous region. Positions 470–485 (PPGPEGPAGLPGPPGT) are enriched in pro residues. Composition is skewed to low complexity over residues 506-523 (LPGADGLPGPPGTMLMLP) and 559-570 (GPAGPMGLTGRP). A triple-helical region region spans residues 559-1570 (GPAGPMGLTG…GLPGPPGPPG (1012 aa)). P570, P576, and P621 each carry 4-hydroxyproline. A 5-hydroxylysine modification is found at K627. A 4-hydroxyproline modification is found at P639. Residue K642 is modified to 5-hydroxylysine. P648, P654, P657, P675, and P678 each carry 4-hydroxyproline. A compositionally biased stretch (low complexity) spans 671–686 (PRGLPGEPGPRGLLGP). P680 and P686 each carry 3-hydroxyproline. Positions 687 to 696 (KGPPGPPGPP) are enriched in pro residues. P690, P696, and P705 each carry 4-hydroxyproline. K708 bears the 5-hydroxylysine mark. 4-hydroxyproline is present on residues P717, P720, P726, and P732. Positions 722–741 (QQGNPGAQGLPGPQGAIGPP) are enriched in low complexity. The residue at position 744 (K744) is a 5-hydroxylysine. The segment covering 747–756 (LGKPGLPGMP) has biased composition (low complexity). 5 positions are modified to 4-hydroxyproline: P750, P756, P762, P765, and P771. K774 carries the post-translational modification 5-hydroxylysine. P780 and P789 each carry 4-hydroxyproline. A 5-hydroxylysine mark is found at K795, K804, K807, and K810. P816 is subject to 4-hydroxyproline. K819 carries the post-translational modification 5-hydroxylysine. P834 carries the 4-hydroxyproline modification. Positions 837–846 (RGEDGPEGPK) are enriched in basic and acidic residues. 5-hydroxylysine is present on residues K846 and K864. A 4-hydroxyproline mark is found at P870, P873, and P876. K882 carries the post-translational modification 5-hydroxylysine. 4-hydroxyproline occurs at positions 888 and 891. K897 carries the post-translational modification 5-hydroxylysine. A 4-hydroxyproline mark is found at P903 and P906. Positions 908–917 (PRGQRGPTGP) are enriched in low complexity. A 4-hydroxyproline mark is found at P930 and P945. 2 stretches are compositionally biased toward low complexity: residues 971 to 990 (KDGLPGHPGQRGETGFQGKT) and 999 to 1011 (VGPQGPTGETGPM). Residues P1017, P1020, P1023, and P1029 each carry the 4-hydroxyproline modification. Residues 1088–1104 (SPGERGPAGAAGPIGIP) are compositionally biased toward low complexity. Residues 1106 to 1115 (RPGPQGPPGP) show a composition bias toward pro residues. Residues P1221 and P1224 each carry the 4-hydroxyproline modification. The span at 1259-1268 (PSGAPGADGP) shows a compositional bias: low complexity. The segment covering 1294–1303 (GLPGEGGPLG) has biased composition (gly residues). 2 stretches are compositionally biased toward pro residues: residues 1380–1398 (TGEPGPSGPPGKRGPPGPA) and 1454–1469 (SPGPDGPPGPMGPPGL). 4-hydroxyproline is present on residues P1467 and P1470. Residues 1485-1494 (PGLIGLIGPP) show a composition bias toward low complexity. Residues 1526–1541 (PLGPPGPPGLPGPPGP) show a composition bias toward pro residues. Residues 1542-1554 (KGAKGSSGPTGPK) show a composition bias toward low complexity. The segment at 1571 to 1605 (EVIQPLPIQASRTRRNIDASQLLDDGAGESYVDYA) is nonhelical region. Residues Y1601 and Y1604 each carry the sulfotyrosine modification. The 229-residue stretch at 1609–1837 (EEIFGSLNSL…GFEVGPACFL (229 aa)) folds into the Fibrillar collagen NC1 domain.

It belongs to the fibrillar collagen family. As to quaternary structure, trimers of two alpha 1(V) and one alpha 2(V) chains in most tissues and trimers of one alpha 1(V), one alpha 2(V), and one alpha 3(V) chains in placenta. Interacts with CSPG4. In terms of processing, hydroxylation on proline residues within the sequence motif, GXPG, is most likely to be 4-hydroxy as this fits the requirement for 4-hydroxylation in vertebrates. Post-translationally, sulfated on 40% of tyrosines. In terms of tissue distribution, widely expressed. Isoform 2 is more highly expressed in liver, kidney and lung.

It localises to the secreted. The protein localises to the extracellular space. The protein resides in the extracellular matrix. In terms of biological role, type V collagen is a member of group I collagen (fibrillar forming collagen). It is a minor connective tissue component of nearly ubiquitous distribution. Type V collagen binds to DNA, heparan sulfate, thrombospondin, heparin, and insulin. Transcriptionally activated by CEBPZ, which recognizes a CCAAT-like motif, CAAAT in the COL5A1 promoter. The chain is Collagen alpha-1(V) chain (Col5a1) from Mus musculus (Mouse).